Here is an 836-residue protein sequence, read N- to C-terminus: Glutamate receptor ionotropic, kainate glr-3 (836 aa).

The first 19 residues, 1–19, serve as a signal peptide directing secretion; sequence MFWIAKTLIAFLILLKTDC. The Extracellular segment spans residues 20-523; that stretch reads YKIAIPANLI…WFKFMDPLST (504 aa). Cys-76 and Cys-320 form a disulfide bridge. N-linked (GlcNAc...) asparagine glycosylation is found at Asn-225, Asn-257, Asn-356, Asn-391, and Asn-419. L-glutamate-binding positions include 478–480 and Arg-485; that span reads SLT. Residues 524–544 traverse the membrane as a helical segment; sequence QVWIMTFASYFVVSVAIWIIA. The Cytoplasmic segment spans residues 545 to 600; it reads KISPYEQFERDEDNGQYKPVDNQFSLRNSFWFTVCSLMQQGSELCPRAASTRLLTG. A helical membrane pass occupies residues 601–621; the sequence is IWWFFALILISSYTANLAAVL. Over 622-780 the chain is Extracellular; sequence TTRRMETPIE…KRKDQDDGES (159 aa). 651–652 is a binding site for L-glutamate; sequence ST. Asn-657 carries N-linked (GlcNAc...) asparagine glycosylation. Glu-699 contacts L-glutamate. The chain crosses the membrane as a helical span at residues 781–801; it reads IGGIFIILVVGLVLTAVLVIF. The Cytoplasmic segment spans residues 802-836; sequence ELITTRKPSPAQSQVIRHVNVIPSFKLGFFRWNVN.

It belongs to the glutamate-gated ion channel (TC 1.A.10.1) family. Expressed in the intestine and in the ASER neuron. Also expressed in the thermosensitive RIA interneuron.

The protein resides in the cell membrane. The protein localises to the postsynaptic cell membrane. With respect to regulation, activated by low temperature of 18 degrees Celsius in ASER neuron. Ionotropic glutamate receptor. Activation by glutamate requires additional verification. L-glutamate acts as an excitatory neurotransmitter at many synapses in the central nervous system. Binding of the excitatory neurotransmitter L-glutamate induces a conformation change, leading to the opening of the cation channel, and thereby converts the chemical signal to an electrical impulse. The receptor then desensitizes rapidly and enters a transient inactive state, characterized by the presence of bound agonist. Its function is as follows. Independent of its ionotropic glutamate receptor activity, acts as a thermoreceptor in the ASER neuron where it triggers a calcium response to activate cold avoidance behavior in response to temperatures below 19 degrees Celsius. Possibly functions as a metabotropic cold receptor and acts upstream of the G(o) G protein goa-1 in the ASER neuron. Also functions in cold sensing in the intestine. The chain is Glutamate receptor ionotropic, kainate glr-3 from Caenorhabditis elegans.